Reading from the N-terminus, the 1405-residue chain is DNA-directed RNA polymerase subunit beta' (1405 aa).

Zn(2+) is bound by residues Cys-70, Cys-72, Cys-85, and Cys-88. Residues Asp-460, Asp-462, and Asp-464 each contribute to the Mg(2+) site. Residues Cys-815, Cys-889, Cys-896, and Cys-899 each coordinate Zn(2+). The segment at 1363–1388 (LAHHAERRRRREDPESTANPSAFDVE) is disordered.

Belongs to the RNA polymerase beta' chain family. In terms of assembly, the RNAP catalytic core consists of 2 alpha, 1 beta, 1 beta' and 1 omega subunit. When a sigma factor is associated with the core the holoenzyme is formed, which can initiate transcription. It depends on Mg(2+) as a cofactor. Requires Zn(2+) as cofactor.

The catalysed reaction is RNA(n) + a ribonucleoside 5'-triphosphate = RNA(n+1) + diphosphate. Its function is as follows. DNA-dependent RNA polymerase catalyzes the transcription of DNA into RNA using the four ribonucleoside triphosphates as substrates. The polypeptide is DNA-directed RNA polymerase subunit beta' (Chromohalobacter salexigens (strain ATCC BAA-138 / DSM 3043 / CIP 106854 / NCIMB 13768 / 1H11)).